A 142-amino-acid polypeptide reads, in one-letter code: Small ribosomal subunit protein uS12 (142 aa).

Belongs to the universal ribosomal protein uS12 family. In terms of assembly, part of the 30S ribosomal subunit.

Its function is as follows. With S4 and S5 plays an important role in translational accuracy. Located at the interface of the 30S and 50S subunits. The chain is Small ribosomal subunit protein uS12 from Thermoplasma acidophilum (strain ATCC 25905 / DSM 1728 / JCM 9062 / NBRC 15155 / AMRC-C165).